Here is a 575-residue protein sequence, read N- to C-terminus: Regulatory protein zeste (575 aa).

Over residues Met-1–Ala-26 the composition is skewed to gly residues. 2 disordered regions span residues Met-1–Thr-53 and Ser-151–Glu-174. Residues Ser-2–Lys-47 form a hydrophobic region. The segment covering Thr-31 to Pro-51 has biased composition (polar residues). Residues Asn-48–Tyr-128 mediate DNA binding. The span at Ser-151–His-164 shows a compositional bias: low complexity.

In terms of assembly, self-associates forming complexes of several hundred monomers.

Its subcellular location is the nucleus. Its function is as follows. Involved in transvection phenomena (= synapsis-dependent gene expression), where the synaptic pairing of chromosomes carrying genes with which zeste interacts influences the expression of these genes. Zeste binds to DNA and stimulates transcription from a nearby promoter. This chain is Regulatory protein zeste (z), found in Drosophila melanogaster (Fruit fly).